The sequence spans 214 residues: Probable transaldolase (214 aa).

The Schiff-base intermediate with substrate role is filled by Lys-83.

This sequence belongs to the transaldolase family. Type 3B subfamily.

Its subcellular location is the cytoplasm. It carries out the reaction D-sedoheptulose 7-phosphate + D-glyceraldehyde 3-phosphate = D-erythrose 4-phosphate + beta-D-fructose 6-phosphate. The protein operates within carbohydrate degradation; pentose phosphate pathway; D-glyceraldehyde 3-phosphate and beta-D-fructose 6-phosphate from D-ribose 5-phosphate and D-xylulose 5-phosphate (non-oxidative stage): step 2/3. Its function is as follows. Transaldolase is important for the balance of metabolites in the pentose-phosphate pathway. In Maridesulfovibrio salexigens (strain ATCC 14822 / DSM 2638 / NCIMB 8403 / VKM B-1763) (Desulfovibrio salexigens), this protein is Probable transaldolase.